A 694-amino-acid chain; its full sequence is Ribonuclease R (694 aa).

In terms of domain architecture, RNB spans 204-525 (RKDLRDLLCF…IVHRLLFHPL (322 aa)). One can recognise an S1 motif domain in the interval 571–648 (ATLYKAFIIT…LTQSIEWTLV (78 aa)). The disordered stretch occupies residues 652–694 (TKAKAKRTSKKKKTESVTTKEKKKSPAKKKKGATKTKKGSGKN). Composition is skewed to basic residues over residues 654–664 (AKAKRTSKKKK) and 672–694 (EKKKSPAKKKKGATKTKKGSGKN).

This sequence belongs to the RNR ribonuclease family. RNase R subfamily.

It localises to the cytoplasm. It catalyses the reaction Exonucleolytic cleavage in the 3'- to 5'-direction to yield nucleoside 5'-phosphates.. Functionally, 3'-5' exoribonuclease that releases 5'-nucleoside monophosphates and is involved in maturation of structured RNAs. This Chlamydia trachomatis serovar D (strain ATCC VR-885 / DSM 19411 / UW-3/Cx) protein is Ribonuclease R.